Consider the following 397-residue polypeptide: ATP-dependent RNA helicase eIF4A (397 aa).

The short motif at Tyr23–Gln51 is the Q motif element. The region spanning Ile54–Ile224 is the Helicase ATP-binding domain. Ala67–Thr74 serves as a coordination point for ATP. The short motif at Asp172–Asp175 is the DEAD box element. The 142-residue stretch at Asp255–Phe396 folds into the Helicase C-terminal domain.

This sequence belongs to the DEAD box helicase family. eIF4A subfamily. In terms of assembly, component of the eIF4F complex, which composition varies with external and internal environmental conditions. It is composed of at least eIF4A, eIF4E and eIF4G.

It is found in the cytoplasm. It carries out the reaction ATP + H2O = ADP + phosphate + H(+). Functionally, ATP-dependent RNA helicase which is a subunit of the eIF4F complex involved in cap recognition and is required for mRNA binding to ribosome. In the current model of translation initiation, eIF4A unwinds RNA secondary structures in the 5'-UTR of mRNAs which is necessary to allow efficient binding of the small ribosomal subunit, and subsequent scanning for the initiator codon. This is ATP-dependent RNA helicase eIF4A (TIF1) from Lodderomyces elongisporus (strain ATCC 11503 / CBS 2605 / JCM 1781 / NBRC 1676 / NRRL YB-4239) (Yeast).